Consider the following 390-residue polypeptide: Elongation factor Tu 2 (390 aa).

The 192-residue stretch at 10–201 (KPHVNVGTIG…LDDYVEVPPR (192 aa)) folds into the tr-type G domain. Positions 19–26 (GHVDHGKT) are G1. GTP is bound at residue 19–26 (GHVDHGKT). Thr-26 is a Mg(2+) binding site. The G2 stretch occupies residues 55–59 (GITIA). The G3 stretch occupies residues 76 to 79 (DCPG). GTP contacts are provided by residues 76–80 (DCPGH) and 131–134 (NKAD). Positions 131–134 (NKAD) are G4. A G5 region spans residues 168–170 (SAL).

It belongs to the TRAFAC class translation factor GTPase superfamily. Classic translation factor GTPase family. EF-Tu/EF-1A subfamily. Monomer.

It is found in the cytoplasm. It catalyses the reaction GTP + H2O = GDP + phosphate + H(+). GTP hydrolase that promotes the GTP-dependent binding of aminoacyl-tRNA to the A-site of ribosomes during protein biosynthesis. The protein is Elongation factor Tu 2 of Wolbachia sp. subsp. Brugia malayi (strain TRS).